Consider the following 495-residue polypeptide: MIPVIALVGRPNVGKSTLFNRLTHTRDALVADFPGLTRDRKYGRAEVEGHEFIVVDTGGIDGTEDGVETKMAGQSLLAIEEADIVLFMVDARAGLMPADQGIAQHLRSREKATFLVANKTDGIDPDTATADFYSLGLGEVHAIAASHGRGVTQLIEDVMAPYMDAEEPEVELTDEEENAAYWAEQEAQGEDVPPEDPEDDFDPRTLPIKLAIVGRPNVGKSTLTNRILGEDRVVVYDMPGTTRDSIYIPMTRDDREYILIDTAGVRKRGKITETVEKFSVIKTLQAIEDSNVVLLVIDARDGISDQDLSLLGFILNSGRSLVIAVNKWDGMTEEARAQVKDMLDLRLGFVDFARIHFISALHGSGVGNLFESVQEAYDCSTKRVGTSLLTRIMQMAEEDHQPPLVRGRRVKLKYAHAGGYNPPIVVIHGNQVTDLSDSYKRYLMNYFRRSLKVMGTPIRIQFKEGENPFAGKRNPLTPNQMRKRKRLMSHLKKGK.

2 EngA-type G domains span residues 3 to 166 and 208 to 381; these read PVIA…MDAE and IKLA…DCST. Residues 9-16, 56-60, 118-121, 214-221, 261-265, and 326-329 contribute to the GTP site; these read GRPNVGKS, DTGGI, NKTD, DTAGV, and NKWD. The KH-like domain occupies 382-466; the sequence is KRVGTSLLTR…PIRIQFKEGE (85 aa).

It belongs to the TRAFAC class TrmE-Era-EngA-EngB-Septin-like GTPase superfamily. EngA (Der) GTPase family. As to quaternary structure, associates with the 50S ribosomal subunit.

Its function is as follows. GTPase that plays an essential role in the late steps of ribosome biogenesis. In Yersinia pseudotuberculosis serotype IB (strain PB1/+), this protein is GTPase Der.